A 195-amino-acid polypeptide reads, in one-letter code: Glutamyl-tRNA(Gln) amidotransferase subunit C, mitochondrial (195 aa).

A mitochondrion-targeting transit peptide spans 1–18 (MNLSTIGFQVIFKQRLRC).

Belongs to the GatC family. Subunit of the heterotrimeric GatCAB amidotransferase (AdT) complex, composed of A, B and C subunits.

It localises to the mitochondrion. The catalysed reaction is L-glutamyl-tRNA(Gln) + L-glutamine + ATP + H2O = L-glutaminyl-tRNA(Gln) + L-glutamate + ADP + phosphate + H(+). In terms of biological role, allows the formation of correctly charged Gln-tRNA(Gln) through the transamidation of misacylated Glu-tRNA(Gln) in the mitochondria. The reaction takes place in the presence of glutamine and ATP through an activated gamma-phospho-Glu-tRNA(Gln). The sequence is that of Glutamyl-tRNA(Gln) amidotransferase subunit C, mitochondrial from Brugia malayi (Filarial nematode worm).